Here is a 495-residue protein sequence, read N- to C-terminus: Amidophosphoribosyltransferase (495 aa).

The tract at residues 1 to 22 is disordered; that stretch reads MFPPSSDLTELNDGQPLSGHHA. Residues 1-28 constitute a propeptide that is removed on maturation; the sequence is MFPPSSDLTELNDGQPLSGHHADKPEEA. Residue Cys29 is the Nucleophile of the active site. A Glutamine amidotransferase type-2 domain is found at 29–254; the sequence is CGVFGIYAPE…AGELVHITES (226 aa). Residue Cys270 participates in [4Fe-4S] cluster binding. Positions 317, 379, and 380 each coordinate Mg(2+). 3 residues coordinate [4Fe-4S] cluster: Cys416, Cys467, and Cys470.

In the C-terminal section; belongs to the purine/pyrimidine phosphoribosyltransferase family. Mg(2+) serves as cofactor. [4Fe-4S] cluster is required as a cofactor.

It catalyses the reaction 5-phospho-beta-D-ribosylamine + L-glutamate + diphosphate = 5-phospho-alpha-D-ribose 1-diphosphate + L-glutamine + H2O. The protein operates within purine metabolism; IMP biosynthesis via de novo pathway; N(1)-(5-phospho-D-ribosyl)glycinamide from 5-phospho-alpha-D-ribose 1-diphosphate: step 1/2. Functionally, catalyzes the formation of phosphoribosylamine from phosphoribosylpyrophosphate (PRPP) and glutamine. The polypeptide is Amidophosphoribosyltransferase (Synechocystis sp. (strain ATCC 27184 / PCC 6803 / Kazusa)).